Here is a 681-residue protein sequence, read N- to C-terminus: DNA ligase (681 aa).

NAD(+)-binding positions include 34–38 (DAEYD), 83–84 (SL), and Glu-115. The N6-AMP-lysine intermediate role is filled by Lys-117. 4 residues coordinate NAD(+): Arg-138, Glu-185, Lys-301, and Lys-325. Zn(2+) is bound by residues Cys-419, Cys-422, Cys-437, and Cys-443. The region spanning 602–681 (RKSDVLAGQT…AALLALIGER (80 aa)) is the BRCT domain.

Belongs to the NAD-dependent DNA ligase family. LigA subfamily. Mg(2+) is required as a cofactor. Requires Mn(2+) as cofactor.

It carries out the reaction NAD(+) + (deoxyribonucleotide)n-3'-hydroxyl + 5'-phospho-(deoxyribonucleotide)m = (deoxyribonucleotide)n+m + AMP + beta-nicotinamide D-nucleotide.. Its function is as follows. DNA ligase that catalyzes the formation of phosphodiester linkages between 5'-phosphoryl and 3'-hydroxyl groups in double-stranded DNA using NAD as a coenzyme and as the energy source for the reaction. It is essential for DNA replication and repair of damaged DNA. The polypeptide is DNA ligase (Chloroflexus aggregans (strain MD-66 / DSM 9485)).